Reading from the N-terminus, the 1641-residue chain is Alpha-2-macroglobulin (1641 aa).

An N-terminal signal peptide occupies residues 1–31 (MRDRVAMMLRPLVRGWIPRAVLLLTVAFSFG). Cysteine 32 carries the N-palmitoyl cysteine lipid modification. Cysteine 32 carries S-diacylglycerol cysteine lipidation. Positions 1166–1169 (CAEQ) form a cross-link, isoglutamyl cysteine thioester (Cys-Gln).

The protein belongs to the protease inhibitor I39 (alpha-2-macroglobulin) family. Bacterial alpha-2-macroglobulin subfamily.

The protein resides in the cell membrane. In terms of biological role, protects the bacterial cell from host peptidases. The polypeptide is Alpha-2-macroglobulin (Xylella fastidiosa (strain 9a5c)).